The primary structure comprises 942 residues: Isoleucine--tRNA ligase (942 aa).

Residues 58 to 68 carry the 'HIGH' region motif; that stretch reads PYANGDIHIGH. Glutamate 566 serves as a coordination point for L-isoleucyl-5'-AMP. Residues 607–611 carry the 'KMSKS' region motif; that stretch reads KMSKS. Lysine 610 contributes to the ATP binding site. Zn(2+) is bound by residues cysteine 905, cysteine 908, cysteine 925, and cysteine 928.

This sequence belongs to the class-I aminoacyl-tRNA synthetase family. IleS type 1 subfamily. In terms of assembly, monomer. Requires Zn(2+) as cofactor.

The protein resides in the cytoplasm. The enzyme catalyses tRNA(Ile) + L-isoleucine + ATP = L-isoleucyl-tRNA(Ile) + AMP + diphosphate. In terms of biological role, catalyzes the attachment of isoleucine to tRNA(Ile). As IleRS can inadvertently accommodate and process structurally similar amino acids such as valine, to avoid such errors it has two additional distinct tRNA(Ile)-dependent editing activities. One activity is designated as 'pretransfer' editing and involves the hydrolysis of activated Val-AMP. The other activity is designated 'posttransfer' editing and involves deacylation of mischarged Val-tRNA(Ile). The protein is Isoleucine--tRNA ligase of Vibrio campbellii (strain ATCC BAA-1116).